Here is a 643-residue protein sequence, read N- to C-terminus: Transcription elongation factor B polypeptide 3 (643 aa).

In terms of domain architecture, TFIIS N-terminal spans 9–82 (DVVRHYQRSI…TKWKAMVAKE (74 aa)). Disordered regions lie at residues 86-289 (IAST…MGAN) and 302-351 (SSKK…SKKP). Residues 94 to 106 (HNEEDSGKTKSSD) are compositionally biased toward basic and acidic residues. Polar residues predominate over residues 114–124 (KGGNSSSGEDL). S120 bears the Phosphoserine mark. Residues 127-136 (SKHKSKHAKS) show a composition bias toward basic residues. Composition is skewed to basic and acidic residues over residues 164 to 198 (HDKS…KDSS) and 207 to 237 (SKSE…VKDK). Basic residues predominate over residues 238–255 (SSKHKSSSSKSSKRSHSP). The span at 302–336 (SSKKSSSNSKSKFVAKPTAAPSSSALSAPTTAGSS) shows a compositional bias: low complexity. The activation domain stretch occupies residues 413 to 571 (AQGISSKTMR…PPRSVQRKQE (159 aa)). Residues 439 to 448 (SLFDLCTRVL) are interacting with Elongin BC complex.

The protein localises to the nucleus. SIII, also known as elongin, is a general transcription elongation factor that increases the RNA polymerase II transcription elongation past template-encoded arresting sites. Subunit A is transcriptionally active and its transcription activity is strongly enhanced by binding to the dimeric complex of the SIII regulatory subunits B and C (elongin BC complex). May play an important role in metamorphosis. This is Transcription elongation factor B polypeptide 3 (EloA) from Drosophila melanogaster (Fruit fly).